Here is an 83-residue protein sequence, read N- to C-terminus: Vitellogenesis-inhibiting hormone (83 aa).

Intrachain disulfides connect Cys15/Cys52, Cys32/Cys48, and Cys35/Cys61.

In terms of tissue distribution, found in the sinus glands of both male and female. Found also in the brain; the neuroendocrine structures of the protocerebrum.

The protein resides in the secreted. In terms of biological role, inhibits secondary vitellogenesis in females. Has no hyperglycemic or molt-inhibiting activity. This chain is Vitellogenesis-inhibiting hormone, found in Armadillidium vulgare (Pillbug).